The following is a 345-amino-acid chain: Phosphate acyltransferase (345 aa).

This sequence belongs to the PlsX family. Homodimer. Probably interacts with PlsY.

The protein resides in the cytoplasm. The enzyme catalyses a fatty acyl-[ACP] + phosphate = an acyl phosphate + holo-[ACP]. It participates in lipid metabolism; phospholipid metabolism. Catalyzes the reversible formation of acyl-phosphate (acyl-PO(4)) from acyl-[acyl-carrier-protein] (acyl-ACP). This enzyme utilizes acyl-ACP as fatty acyl donor, but not acyl-CoA. In Proteus mirabilis (strain HI4320), this protein is Phosphate acyltransferase.